A 544-amino-acid polypeptide reads, in one-letter code: MPKAKAKTKNTEIISPHHYVYPNTTTLKNKYGIKNLNAFLEKCSHDTAKAMINLREESLPEYFDTAYLCHIHQQLFKNTFEWAGYLRHIPFTFADGTTAAMPEMKRTGWKNAFAIGDEIQEGLQRLDQTLAEKNNLQGLTREEFNSEAIELFNSLNQLHPFREGNGRTQRLFFENLAKAAGHQLNFSLITKERMMVASVAVAENGDLEPMQHLFEDISNPEKIRLLKEFMHTMKNTGRNVNDRPVMVAKEGETYTGTYRGAGLEGFALNVKGAYIIGNIDHLPPEQLKILKPGDKITFTAPKAEELKKTLIPKETLVPLTKLEIAEMVAEDAFVHTCRDQICSLSKIVYGSQGVLNKNIIEIIKNPSKGQQLATQIERTPYSVHSLAGFDLICFKTGARVRAEKHVALLSCAVANFTHAVKHARQEITKEHQAEQNRLRQEVPMPSQSLQDLLSLPKEFQQKALGVSPLLQKELTSLLQKVNSRLSSSEQRALRENNHETLAKNLGVSEQKAKEITKTVMKAREVQQKSQTRTVSHSKTLAMAS.

The Fido domain maps to 63–216; sequence FDTAYLCHIH…LEPMQHLFED (154 aa). Residues 93 to 94, 106 to 107, 163 to 167, and Arg-170 contribute to the ATP site; these read FA, RT, and EGNGR.

It is found in the secreted. The catalysed reaction is L-tyrosyl-[protein] + ATP = O-(5'-adenylyl)-L-tyrosyl-[protein] + diphosphate. The enzyme catalyses L-threonyl-[protein] + ATP = 3-O-(5'-adenylyl)-L-threonyl-[protein] + diphosphate. Functionally, adenylyltransferase involved in virulence by mediating the addition of adenosine 5'-monophosphate (AMP) to specific residue of host target proteins. The protein is Protein adenylyltransferase (bepA) of Bartonella henselae (strain ATCC 49882 / DSM 28221 / CCUG 30454 / Houston 1) (Rochalimaea henselae).